A 406-amino-acid polypeptide reads, in one-letter code: Tryptophan synthase beta chain (406 aa).

An N6-(pyridoxal phosphate)lysine modification is found at Lys-99.

The protein belongs to the TrpB family. Tetramer of two alpha and two beta chains. The cofactor is pyridoxal 5'-phosphate.

The catalysed reaction is (1S,2R)-1-C-(indol-3-yl)glycerol 3-phosphate + L-serine = D-glyceraldehyde 3-phosphate + L-tryptophan + H2O. The protein operates within amino-acid biosynthesis; L-tryptophan biosynthesis; L-tryptophan from chorismate: step 5/5. The beta subunit is responsible for the synthesis of L-tryptophan from indole and L-serine. This chain is Tryptophan synthase beta chain, found in Brucella abortus (strain 2308).